A 519-amino-acid polypeptide reads, in one-letter code: T-complex protein 11-like protein 2 (519 aa).

Positions 1 to 30 are disordered; that stretch reads MPFNGEKQCVGEDQPSDSDSSRFSESMASL. The residue at position 16 (Ser16) is a Phosphoserine. A compositionally biased stretch (low complexity) spans 17-29; the sequence is DSDSSRFSESMAS.

It belongs to the TCP11 family. In terms of assembly, interacts with FMNL2; this interaction promotes muscle-derived satellite cell (MDSC) migration and differentiation.

It is found in the cytoplasm. The protein localises to the cytoskeleton. Promotes the migration of muscle-derived satellite cells (MDSCs) during differentiation throught interaction with FMNL2 and therefore may participate in microfilament assembly. The chain is T-complex protein 11-like protein 2 from Homo sapiens (Human).